Consider the following 49-residue polypeptide: L-amino-acid oxidase (49 aa).

Met43–Ser44 contributes to the FAD binding site.

Belongs to the flavin monoamine oxidase family. FIG1 subfamily. In terms of assembly, homodimer; non-covalently linked. It depends on FAD as a cofactor. N-glycosylated. In terms of tissue distribution, expressed by the venom gland.

It localises to the secreted. The catalysed reaction is an L-alpha-amino acid + O2 + H2O = a 2-oxocarboxylate + H2O2 + NH4(+). It carries out the reaction L-leucine + O2 + H2O = 4-methyl-2-oxopentanoate + H2O2 + NH4(+). In terms of biological role, catalyzes an oxidative deamination of predominantly hydrophobic and aromatic L-amino acids, thus producing hydrogen peroxide that may contribute to the diverse toxic effects of this enzyme. Shows activity on L-Leu. Exhibits diverse biological activities, such as hemorrhage, hemolysis, edema, antibacterial and antiparasitic activities, as well as regulation of platelet aggregation. Its effect on platelets is controversial, since it either induces aggregation or inhibits agonist-induced aggregation. These different effects are probably due to different experimental conditions. In addition, this protein induces apoptosis and necrosis and has inhibitory effects on rat kidney function (decrease of blood flow and glomerular filtration). The chain is L-amino-acid oxidase from Bothrops insularis (Golden lancehead).